The sequence spans 308 residues: Nodulation protein D 1 (308 aa).

The HTH lysR-type domain maps to 6–63 (LDLNLLVALDALMTERKLTAAARRINLSQPAMSAAIARLRTYFGDELFSMQGRELIPT). The segment at residues 23 to 42 (LTAAARRINLSQPAMSAAIA) is a DNA-binding region (H-T-H motif).

This sequence belongs to the LysR transcriptional regulatory family.

In terms of biological role, nodD regulates the expression of the nodABCFE genes which encode other nodulation proteins. NodD is also a negative regulator of its own expression. Binds flavonoids as inducers. This is Nodulation protein D 1 (nodD1) from Rhizobium meliloti (strain 1021) (Ensifer meliloti).